Consider the following 405-residue polypeptide: Chorismate synthase (405 aa).

Arg-43 and Arg-49 together coordinate NADP(+). FMN is bound by residues 138–140 and 259–260; these read RAS and QA. Over residues 275–286 the composition is skewed to basic and acidic residues; the sequence is RRGSQAHDEMRP. The segment at 275–308 is disordered; it reads RRGSQAHDEMRPGPDGVLRSTNRAGGLEGGMTNG. FMN contacts are provided by residues Gly-303, 318–322, and Arg-344; that span reads KPIST.

This sequence belongs to the chorismate synthase family. In terms of assembly, homotetramer. It depends on FMNH2 as a cofactor.

It catalyses the reaction 5-O-(1-carboxyvinyl)-3-phosphoshikimate = chorismate + phosphate. The protein operates within metabolic intermediate biosynthesis; chorismate biosynthesis; chorismate from D-erythrose 4-phosphate and phosphoenolpyruvate: step 7/7. Its function is as follows. Catalyzes the anti-1,4-elimination of the C-3 phosphate and the C-6 proR hydrogen from 5-enolpyruvylshikimate-3-phosphate (EPSP) to yield chorismate, which is the branch point compound that serves as the starting substrate for the three terminal pathways of aromatic amino acid biosynthesis. This reaction introduces a second double bond into the aromatic ring system. This Nocardia farcinica (strain IFM 10152) protein is Chorismate synthase.